The chain runs to 376 residues: Serine/threonine-protein kinase-transforming protein mos (376 aa).

In terms of domain architecture, Protein kinase spans 94-376 (VCLMHRLGSG…KALADSIEPM (283 aa)). ATP-binding positions include 100 to 108 (LGSGGFGSV) and lysine 121. The active-site Proton acceptor is the aspartate 229.

The protein belongs to the protein kinase superfamily. Ser/Thr protein kinase family.

The catalysed reaction is L-seryl-[protein] + ATP = O-phospho-L-seryl-[protein] + ADP + H(+). It carries out the reaction L-threonyl-[protein] + ATP = O-phospho-L-threonyl-[protein] + ADP + H(+). This Moloney murine sarcoma virus (strain m1) (MoMSV) protein is Serine/threonine-protein kinase-transforming protein mos (V-MOS).